Here is a 250-residue protein sequence, read N- to C-terminus: Urease accessory protein UreG 3 (250 aa).

Positions 1–24 (MPDNASAQQPGQPAQGPNEHYHQP) are disordered. Residues 7–17 (AQQPGQPAQGP) show a composition bias toward low complexity. 37-44 (GPVGTGKS) provides a ligand contact to GTP. Positions 230–250 (GTHVPTDPGPMAPHSHSHDGS) are disordered.

The protein belongs to the SIMIBI class G3E GTPase family. UreG subfamily. As to quaternary structure, homodimer. UreD, UreF and UreG form a complex that acts as a GTP-hydrolysis-dependent molecular chaperone, activating the urease apoprotein by helping to assemble the nickel containing metallocenter of UreC. The UreE protein probably delivers the nickel.

It localises to the cytoplasm. In terms of biological role, facilitates the functional incorporation of the urease nickel metallocenter. This process requires GTP hydrolysis, probably effectuated by UreG. The chain is Urease accessory protein UreG 3 from Streptomyces griseus subsp. griseus (strain JCM 4626 / CBS 651.72 / NBRC 13350 / KCC S-0626 / ISP 5235).